The sequence spans 671 residues: Polyadenylate-binding protein 8 (671 aa).

RRM domains are found at residues 45 to 123 (TSLY…YSVR), 133 to 210 (GNIF…PFVH), 224 to 301 (TNVY…KAQK), and 327 to 404 (SNLY…LAQR). Residues 467-526 (LVPGMRPGGSPMPNFFMPMMQQGQQQQQQQQQQQRPGGGRRGALPQPQQPSPMMQQQMHP) are disordered. Composition is skewed to low complexity over residues 483 to 501 (MPMM…QQQR) and 508 to 525 (GALP…QQMH). The 78-residue stretch at 573–650 (PIVALATRLA…AMDVLRSVAQ (78 aa)) folds into the PABC domain.

It belongs to the polyadenylate-binding protein type-1 family. In terms of assembly, interacts with ERD15/CID1. Interacts with Turnip mosaic virus (TuMV) VPg-Pro and RNA-dependent RNA polymerase (RdRp). Expressed predominantly in immature flowers.

The protein localises to the cytoplasm. It localises to the nucleus. Its function is as follows. Binds the poly(A) tail of mRNA. Appears to be an important mediator of the multiple roles of the poly(A) tail in mRNA biogenesis, stability and translation. During infection with potyvirus TuMV, acts as a potential integral component of the viral replicase complex that could play an important role in the regulation of potyviral RNA-dependent RNA polymerase (RdRp). The chain is Polyadenylate-binding protein 8 (PAB8) from Arabidopsis thaliana (Mouse-ear cress).